Consider the following 286-residue polypeptide: MILFSKMHGLGNDYVVIDESAQECIPEDKKPEFVREVCTRGFSVGADGVIFVQPASGEGDIRFRIFNADGSEAEMCGNGIRCFSKFVYDNAIVRKRRLEVETLAGIKTVELEVEDGAVVSSRVDMGTATFKTDQIPMDVEEYEFIDRFLPVEGEDIKLTALSVGNPHAIIFVDDAEGVDLDRLGPAIENHPLFPERINVHFVEVVSPSEIIMVTWERGAGPTMACGTGATASVIAGVKLEKLDDSVLVHLPGGELKIDVYQDGTELGAYMEGDAVMVFDGILLRDP.

2 residues coordinate substrate: N12 and N67. C76 functions as the Proton donor in the catalytic mechanism. Residues 77-78, N165, N198, and 216-217 each bind substrate; these read GN and ER. Residue C225 is the Proton acceptor of the active site. 226–227 provides a ligand contact to substrate; it reads GT.

The protein belongs to the diaminopimelate epimerase family. Homodimer.

The protein localises to the cytoplasm. It carries out the reaction (2S,6S)-2,6-diaminopimelate = meso-2,6-diaminopimelate. The protein operates within amino-acid biosynthesis; L-lysine biosynthesis via DAP pathway; DL-2,6-diaminopimelate from LL-2,6-diaminopimelate: step 1/1. Catalyzes the stereoinversion of LL-2,6-diaminopimelate (L,L-DAP) to meso-diaminopimelate (meso-DAP), a precursor of L-lysine. This Methanothermobacter thermautotrophicus (strain ATCC 29096 / DSM 1053 / JCM 10044 / NBRC 100330 / Delta H) (Methanobacterium thermoautotrophicum) protein is Diaminopimelate epimerase.